We begin with the raw amino-acid sequence, 169 residues long: Cell division inhibitor SulA (169 aa).

The tract at residues 1-22 is disordered; the sequence is MHTSIYANRSTSFSPSAGNDTQ. Residues 106–112 are ftsZ binding; that stretch reads ALRTGNY. Positions 162–169 are lon protease binding; sequence KIHSNLYH.

It belongs to the SulA family. In terms of assembly, interacts with FtsZ. Post-translationally, is rapidly cleaved and degraded by the Lon protease once DNA damage is repaired.

In terms of biological role, component of the SOS system and an inhibitor of cell division. Accumulation of SulA causes rapid cessation of cell division and the appearance of long, non-septate filaments. In the presence of GTP, binds a polymerization-competent form of FtsZ in a 1:1 ratio, thus inhibiting FtsZ polymerization and therefore preventing it from participating in the assembly of the Z ring. This mechanism prevents the premature segregation of damaged DNA to daughter cells during cell division. The polypeptide is Cell division inhibitor SulA (Enterobacter sp. (strain 638)).